The following is a 156-amino-acid chain: Small ribosomal subunit protein uS7c (156 aa).

Belongs to the universal ribosomal protein uS7 family. In terms of assembly, part of the 30S ribosomal subunit.

It is found in the plastid. The protein localises to the chloroplast. Functionally, one of the primary rRNA binding proteins, it binds directly to 16S rRNA where it nucleates assembly of the head domain of the 30S subunit. The chain is Small ribosomal subunit protein uS7c (rps7) from Pisum sativum (Garden pea).